An 856-amino-acid polypeptide reads, in one-letter code: Glucans biosynthesis glucosyltransferase H (856 aa).

6 helical membrane passes run 144-164 (ILLV…KGIM), 198-218 (ILIL…TALM), 517-537 (VFLT…FLVL), 574-594 (LFST…ILIW), 608-628 (TLSM…RMIF), and 684-704 (FLWW…VSVI).

This sequence belongs to the glycosyltransferase 2 family. OpgH subfamily.

It is found in the cell inner membrane. It participates in glycan metabolism; osmoregulated periplasmic glucan (OPG) biosynthesis. Functionally, involved in the biosynthesis of osmoregulated periplasmic glucans (OPGs). This is Glucans biosynthesis glucosyltransferase H from Pseudomonas fluorescens (strain ATCC BAA-477 / NRRL B-23932 / Pf-5).